We begin with the raw amino-acid sequence, 487 residues long: Kynureninase 1 (487 aa).

Residues leucine 147, threonine 148, 175 to 178, serine 232, aspartate 261, histidine 264, and tyrosine 286 contribute to the pyridoxal 5'-phosphate site; that span reads FPSD. At lysine 287 the chain carries N6-(pyridoxal phosphate)lysine. Residues tryptophan 327 and asparagine 355 each contribute to the pyridoxal 5'-phosphate site.

This sequence belongs to the kynureninase family. As to quaternary structure, homodimer. It depends on pyridoxal 5'-phosphate as a cofactor.

The protein localises to the cytoplasm. It carries out the reaction L-kynurenine + H2O = anthranilate + L-alanine + H(+). The catalysed reaction is 3-hydroxy-L-kynurenine + H2O = 3-hydroxyanthranilate + L-alanine + H(+). The protein operates within amino-acid degradation; L-kynurenine degradation; L-alanine and anthranilate from L-kynurenine: step 1/1. It participates in cofactor biosynthesis; NAD(+) biosynthesis; quinolinate from L-kynurenine: step 2/3. In terms of biological role, catalyzes the cleavage of L-kynurenine (L-Kyn) and L-3-hydroxykynurenine (L-3OHKyn) into anthranilic acid (AA) and 3-hydroxyanthranilic acid (3-OHAA), respectively. The chain is Kynureninase 1 (bna5-1) from Aspergillus oryzae (strain ATCC 42149 / RIB 40) (Yellow koji mold).